We begin with the raw amino-acid sequence, 312 residues long: 2-phospho-L-lactate transferase (312 aa).

Residues aspartate 50 and lysine 89 each coordinate 7,8-didemethyl-8-hydroxy-5-deazariboflavin.

This sequence belongs to the CofD family. In terms of assembly, homodimer. It depends on Mg(2+) as a cofactor.

It carries out the reaction (2S)-lactyl-2-diphospho-5'-guanosine + 7,8-didemethyl-8-hydroxy-5-deazariboflavin = oxidized coenzyme F420-0 + GMP + H(+). It participates in cofactor biosynthesis; coenzyme F420 biosynthesis. In terms of biological role, catalyzes the transfer of the 2-phospholactate moiety from (2S)-lactyl-2-diphospho-5'-guanosine to 7,8-didemethyl-8-hydroxy-5-deazariboflavin (FO) with the formation of oxidized coenzyme F420-0 and GMP. The sequence is that of 2-phospho-L-lactate transferase from Methanococcus vannielii (strain ATCC 35089 / DSM 1224 / JCM 13029 / OCM 148 / SB).